Reading from the N-terminus, the 568-residue chain is K(+) efflux antiporter 5 (568 aa).

Residues 1-20 form the signal peptide; the sequence is MARFAVIGLTFLLLLGTSLS. The tract at residues 59-78 is disordered; the sequence is EFSENDSPEGSDGASFNSSV. Helical transmembrane passes span 154–174, 178–198, 201–221, 230–250, 264–284, 298–318, 334–354, 389–409, 422–442, 447–467, 476–496, and 510–530; these read LISD…VFSC, PVIV…LKFI, MVQV…ALGL, VVGP…MFLC, GIFV…KFLV, IGIL…LPVL, LLLI…SFVP, LGLS…TTEF, NLFA…HFLW, ILLA…AVVV, ISFH…VLLS, and LLLL…FKLI.

The protein belongs to the monovalent cation:proton antiporter 2 (CPA2) transporter (TC 2.A.37) family. KEA (TC 2.A.37.1) subfamily. As to expression, expressed in roots, stems, leaves, flowers and silique.

It is found in the golgi apparatus membrane. Its subcellular location is the golgi apparatus. The protein localises to the trans-Golgi network membrane. It localises to the prevacuolar compartment membrane. The protein resides in the endomembrane system. The catalysed reaction is K(+)(in) + H(+)(out) = K(+)(out) + H(+)(in). Electroneutral K(+)/H(+) efflux antiporter involved in K(+) homeostasis and osmotic adjustment. Together with KEA4 and KEA6, promotes growth and development, and facilitates endosomal pH and ions homeostasis, as well as salt tolerance (e.g. K(+), NaCl and LiCl), probably by supporting cell wall biosynthesis during rapid etiolated seedling growth. This is K(+) efflux antiporter 5 from Arabidopsis thaliana (Mouse-ear cress).